Reading from the N-terminus, the 492-residue chain is GTPase Obg (492 aa).

The Obg domain occupies 2-159; it reads PRFVDRVVIH…RELTLELKTV (158 aa). The region spanning 160-340 is the OBG-type G domain; sequence ADVGLIGFPS…LIFGLWQMIS (181 aa). GTP-binding positions include 166–173, 191–195, 212–215, 292–295, and 321–323; these read GFPSAGKS, FTTLV, DVPG, NKID, and STV. S173 and T193 together coordinate Mg(2+). Residues 358–438 enclose the OCT domain; it reads PVPVDDSGFR…IGDMTFDWEP (81 aa). A disordered region spans residues 441 to 492; that stretch reads PAGQQVVLSGRGTDARLERTERVGAAERKAARRQRRTGDDAERGTTERGENT. Basic and acidic residues-rich tracts occupy residues 453–469 and 476–492; these read TDARLERTERVGAAERK and RTGDDAERGTTERGENT.

It belongs to the TRAFAC class OBG-HflX-like GTPase superfamily. OBG GTPase family. As to quaternary structure, monomer. It depends on Mg(2+) as a cofactor.

It localises to the cytoplasm. An essential GTPase which binds GTP, GDP and possibly (p)ppGpp with moderate affinity, with high nucleotide exchange rates and a fairly low GTP hydrolysis rate. Plays a role in control of the cell cycle, stress response, ribosome biogenesis and in those bacteria that undergo differentiation, in morphogenesis control. This is GTPase Obg from Mycolicibacterium paratuberculosis (strain ATCC BAA-968 / K-10) (Mycobacterium paratuberculosis).